A 248-amino-acid chain; its full sequence is PF03932 family protein CutC (248 aa).

Belongs to the CutC family. As to quaternary structure, homodimer.

Its subcellular location is the cytoplasm. In Salmonella newport (strain SL254), this protein is PF03932 family protein CutC.